We begin with the raw amino-acid sequence, 66 residues long: Beta-mammal toxin Co3 (66 aa).

The 66-residue stretch at 1–66 folds into the LCN-type CS-alpha/beta domain; that stretch reads KEGYIVNYYD…VWPLPNKTCN (66 aa). Intrachain disulfides connect Cys12–Cys65, Cys16–Cys41, Cys25–Cys46, and Cys29–Cys48.

In terms of tissue distribution, expressed by the venom gland.

It is found in the secreted. Beta toxins bind voltage-independently at site-4 of sodium channels (Nav) and shift the voltage of activation toward more negative potentials thereby affecting sodium channel activation and promoting spontaneous and repetitive firing. This toxin acts on human Nav1.2/SCN2A, Nav1.4/SCN4A and Nav1.6/SCN8A voltage-gated sodium channels. Also, it reduces the peak of sodium currents in Nav1.5/SCN5A at all potentials. In vivo, is lethal to mice when intraperitoneally injected at a dose of 5ug. No activity is observed when injected into crickets or woodlice. This Centruroides ornatus (Scorpion) protein is Beta-mammal toxin Co3.